The sequence spans 452 residues: FAD-linked oxidoreductase DDB_G0289697 (452 aa).

Residues 44–212 form the FAD-binding PCMH-type domain; sequence VVNTPLLIVY…TDFTFKLHPV (169 aa). A Pros-8alpha-FAD histidine modification is found at histidine 81.

It belongs to the oxygen-dependent FAD-linked oxidoreductase family. It depends on FAD as a cofactor.

The polypeptide is FAD-linked oxidoreductase DDB_G0289697 (Dictyostelium discoideum (Social amoeba)).